A 123-amino-acid chain; its full sequence is Histone H2B (123 aa).

The tract at residues 1 to 31 (MPPKVASKGAKKAASKAKAARSGEKKKKRRR) is disordered. The segment covering 9–31 (GAKKAASKAKAARSGEKKKKRRR) has biased composition (basic residues). Ser-110 carries O-linked (GlcNAc) serine glycosylation. Lys-118 participates in a covalent cross-link: Glycyl lysine isopeptide (Lys-Gly) (interchain with G-Cter in ubiquitin).

This sequence belongs to the histone H2B family. The nucleosome is a histone octamer containing two molecules each of H2A, H2B, H3 and H4 assembled in one H3-H4 heterotetramer and two H2A-H2B heterodimers. The octamer wraps approximately 147 bp of DNA. Monoubiquitination of Lys-118 gives a specific tag for epigenetic transcriptional activation and is also prerequisite for histone H3 'Lys-4' and 'Lys-79' methylation. In terms of processing, glcNAcylation at Ser-110 promotes monoubiquitination of Lys-118. It fluctuates in response to extracellular glucose, and associates with transcribed genes.

The protein localises to the nucleus. It is found in the chromosome. Functionally, core component of nucleosome. Nucleosomes wrap and compact DNA into chromatin, limiting DNA accessibility to the cellular machineries which require DNA as a template. Histones thereby play a central role in transcription regulation, DNA repair, DNA replication and chromosomal stability. DNA accessibility is regulated via a complex set of post-translational modifications of histones, also called histone code, and nucleosome remodeling. In Platynereis dumerilii (Dumeril's clam worm), this protein is Histone H2B.